The sequence spans 35 residues: Probable L,D-transpeptidase ErfK/SrfK (35 aa).

The N-terminal stretch at methionine 1–alanine 21 is a signal peptide.

This sequence belongs to the YkuD family.

It is found in the periplasm. The protein operates within cell wall biogenesis; peptidoglycan biosynthesis. The sequence is that of Probable L,D-transpeptidase ErfK/SrfK (erfK) from Klebsiella aerogenes (Enterobacter aerogenes).